Reading from the N-terminus, the 169-residue chain is Non-specific lipid transfer protein GPI-anchored 11 (169 aa).

The first 23 residues, 1 to 23, serve as a signal peptide directing secretion; it reads MAYATILMIFSVVALMSGERAHA. Intrachain disulfides connect Cys-27–Cys-70, Cys-37–Cys-54, Cys-55–Cys-95, and Cys-68–Cys-105. Ser-146 carries GPI-anchor amidated serine lipidation. The propeptide at 147-169 is removed in mature form; the sequence is SDASLLSVSFAFVIFMALISSFY.

Belongs to the plant LTP family. In terms of tissue distribution, expressed in a vascular-specific manner, mainly in roots, and, to a lower extent, in hypocotyls, seedlings stems and flowers.

The protein resides in the cell membrane. Its subcellular location is the secreted. Functionally, probable lipid transfer protein. Proteoglycan-like factor that exhibits xylogen activity consisting in mediating local and inductive cell-cell interactions required for xylem differentiation. This Arabidopsis thaliana (Mouse-ear cress) protein is Non-specific lipid transfer protein GPI-anchored 11.